A 217-amino-acid chain; its full sequence is Non-structural protein NS3 (217 aa).

It belongs to the orbivirus NS3 family.

May play a role in the release of virions from infected cells. This chain is Non-structural protein NS3 (Segment-10), found in African horse sickness virus (AHSV).